A 142-amino-acid chain; its full sequence is NADH-quinone oxidoreductase subunit A (142 aa).

The next 3 helical transmembrane spans lie at 8–28, 63–83, and 93–113; these read FGTV…GYLT, FYVV…LFPW, and FALI…VYAW.

This sequence belongs to the complex I subunit 3 family. NDH-1 is composed of 14 different subunits. Subunits NuoA, H, J, K, L, M, N constitute the membrane sector of the complex.

The protein resides in the cell inner membrane. The enzyme catalyses a quinone + NADH + 5 H(+)(in) = a quinol + NAD(+) + 4 H(+)(out). NDH-1 shuttles electrons from NADH, via FMN and iron-sulfur (Fe-S) centers, to quinones in the respiratory chain. The immediate electron acceptor for the enzyme in this species is believed to be a menaquinone. Couples the redox reaction to proton translocation (for every two electrons transferred, four hydrogen ions are translocated across the cytoplasmic membrane), and thus conserves the redox energy in a proton gradient. This chain is NADH-quinone oxidoreductase subunit A, found in Chlorobium phaeobacteroides (strain BS1).